Here is a 385-residue protein sequence, read N- to C-terminus: MSKRDYYEVLGVAKTASESELKVAFRKLAMVHHPDRNPGDKEAEIKFKEVNEAYQCLSDGQKRAAYDRFGHAAFSQGGAGGPGFGNEFGDFMSDIFENFFGDGRAAPGGGAGRGRGGAPGRERGSDLRYNLEISLEEAFAGKTETIRIPTSIACETCSGTGAKAGSKPRTCSTCGGYGRVRAAQGFFAIERTCPNCHGRGEVVDDPCTACSGAGRVNRERTLSINVPAGVDDGLRIRLAGEGESGMRGGPAGDLYVFLSIKPHPFFQRDGADLFCRVPISMVTAALSGEITVPVIDGSQTQVRIPAGTQTGKQFRIKSKGMPVLRSREVGDLYIQVSVETPQNLTKRQRELLQEFDQSASDENHPESAGFFSKVRDFFVSGATRA.

The 66-residue stretch at aspartate 5–glycine 70 folds into the J domain. The CR-type zinc-finger motif lies at glycine 141–glutamate 219. 8 residues coordinate Zn(2+): cysteine 154, cysteine 157, cysteine 171, cysteine 174, cysteine 193, cysteine 196, cysteine 207, and cysteine 210. CXXCXGXG motif repeat units follow at residues cysteine 154–glycine 161, cysteine 171–glycine 178, cysteine 193–glycine 200, and cysteine 207–glycine 214.

It belongs to the DnaJ family. In terms of assembly, homodimer. Zn(2+) is required as a cofactor.

It is found in the cytoplasm. Functionally, participates actively in the response to hyperosmotic and heat shock by preventing the aggregation of stress-denatured proteins and by disaggregating proteins, also in an autonomous, DnaK-independent fashion. Unfolded proteins bind initially to DnaJ; upon interaction with the DnaJ-bound protein, DnaK hydrolyzes its bound ATP, resulting in the formation of a stable complex. GrpE releases ADP from DnaK; ATP binding to DnaK triggers the release of the substrate protein, thus completing the reaction cycle. Several rounds of ATP-dependent interactions between DnaJ, DnaK and GrpE are required for fully efficient folding. Also involved, together with DnaK and GrpE, in the DNA replication of plasmids through activation of initiation proteins. This chain is Chaperone protein DnaJ, found in Methylorubrum extorquens (strain PA1) (Methylobacterium extorquens).